The chain runs to 216 residues: Early E3 25 kDa glycoprotein (216 aa).

Residues N25, N82, N97, N109, N142, N147, and N160 are each glycosylated (N-linked (GlcNAc...) asparagine; by host).

This is Early E3 25 kDa glycoprotein from Canis lupus familiaris (Dog).